A 250-amino-acid polypeptide reads, in one-letter code: Ribosomal RNA small subunit methyltransferase J (250 aa).

S-adenosyl-L-methionine-binding positions include 101–102 (RD), 117–118 (ER), 153–154 (SS), and Asp-171.

It belongs to the methyltransferase superfamily. RsmJ family.

It localises to the cytoplasm. It catalyses the reaction guanosine(1516) in 16S rRNA + S-adenosyl-L-methionine = N(2)-methylguanosine(1516) in 16S rRNA + S-adenosyl-L-homocysteine + H(+). Functionally, specifically methylates the guanosine in position 1516 of 16S rRNA. This Escherichia coli O81 (strain ED1a) protein is Ribosomal RNA small subunit methyltransferase J.